A 276-amino-acid chain; its full sequence is Probable transposase for insertion sequence element IS702 (276 aa).

In terms of domain architecture, DDE Tnp4 spans 118-256; it reads MDVTESPIER…SNQYRNRHRR (139 aa). A divalent metal cation-binding residues include Asp-119, Asp-170, Asp-190, and Glu-234.

The protein belongs to the transposase 11 family. A divalent metal cation serves as cofactor.

In terms of biological role, involved in the transposition of the insertion sequence. This chain is Probable transposase for insertion sequence element IS702, found in Microchaete diplosiphon (Fremyella diplosiphon).